Here is a 103-residue protein sequence, read N- to C-terminus: Large ribosomal subunit protein bL21 (103 aa).

This sequence belongs to the bacterial ribosomal protein bL21 family. In terms of assembly, part of the 50S ribosomal subunit. Contacts protein L20.

Functionally, this protein binds to 23S rRNA in the presence of protein L20. This Mycobacterium sp. (strain JLS) protein is Large ribosomal subunit protein bL21.